The chain runs to 350 residues: Phosphotriesterase-related protein (350 aa).

Positions 22, 24, 169, 201, 230, and 298 each coordinate a divalent metal cation.

Belongs to the metallo-dependent hydrolases superfamily. Phosphotriesterase family. It depends on a divalent metal cation as a cofactor.

This chain is Phosphotriesterase-related protein, found in Drosophila persimilis (Fruit fly).